The chain runs to 51 residues: Large ribosomal subunit protein eL39 (51 aa).

Belongs to the eukaryotic ribosomal protein eL39 family.

The protein is Large ribosomal subunit protein eL39 (rpl39e) of Methanocaldococcus jannaschii (strain ATCC 43067 / DSM 2661 / JAL-1 / JCM 10045 / NBRC 100440) (Methanococcus jannaschii).